The sequence spans 331 residues: UPF0194 membrane protein YbhG (331 aa).

The N-terminal stretch at 1 to 19 is a signal peptide; the sequence is MKKPVVIGLVIAAIVAVIA. A coiled-coil region spans residues 140-209; that stretch reads RTISANDLEN…DLQDTTLIAP (70 aa).

It belongs to the UPF0194 family.

It is found in the periplasm. This is UPF0194 membrane protein YbhG (ybhG) from Salmonella typhi.